The primary structure comprises 583 residues: DNA ligase (583 aa).

E249 lines the ATP pocket. The active-site N6-AMP-lysine intermediate is the K251. ATP contacts are provided by R256, R271, E301, F341, R416, and K422.

The protein belongs to the ATP-dependent DNA ligase family. It depends on Mg(2+) as a cofactor.

It catalyses the reaction ATP + (deoxyribonucleotide)n-3'-hydroxyl + 5'-phospho-(deoxyribonucleotide)m = (deoxyribonucleotide)n+m + AMP + diphosphate.. In terms of biological role, DNA ligase that seals nicks in double-stranded DNA during DNA replication, DNA recombination and DNA repair. The chain is DNA ligase from Pyrobaculum calidifontis (strain DSM 21063 / JCM 11548 / VA1).